A 359-amino-acid chain; its full sequence is uncharacterized protein (359 aa).

The Protein kinase domain occupies Tyr-43–Gly-309. Residues Leu-49 to Val-57 and Lys-72 each bind ATP. The active-site Proton acceptor is Asp-163. Residues Arg-314–Pro-359 are disordered. Positions Gly-350–Pro-359 are enriched in gly residues.

The protein belongs to the protein kinase superfamily. Ser/Thr protein kinase family. STKL subfamily.

It carries out the reaction L-seryl-[protein] + ATP = O-phospho-L-seryl-[protein] + ADP + H(+). It catalyses the reaction L-threonyl-[protein] + ATP = O-phospho-L-threonyl-[protein] + ADP + H(+). This is an uncharacterized protein from Homo sapiens (Human).